Reading from the N-terminus, the 406-residue chain is MIPGIFLSLPDLRCSLLLLVTWVFTPVTAEIISLDTENIDDILNNADVALVNFYADWCRFSQMLHPIFEEASNVIKEEYPNANQVVFARVDCDQHSDIAQRYRISKYPTLKLFRNGMMMKREYRGQRSVKALADYIRQQKSDPIQELHDLAEITTPDRSKRNIIGYFEQKDSENYRVFERVANILHDDCAFLAAFGVVSKPERYSGDNIVYKPPGHSAPDMVYLGSMTNFDGTYNWIQDKCVPLVREITFENGEELTEEGLPFLILFHMKEDTESLEIFQNEVARQLISEKGTINFLHADCDKFRHPLLHIQKTPADCPVIAIDSFRHMYVFGDFRDVLIPGKLKQFVFDLHSGKLHREFHHGPDPTDTAPGEEVQDVASSPPESSFQKLAPSEYRYTLLRDRDEL.

Positions 1–29 (MIPGIFLSLPDLRCSLLLLVTWVFTPVTA) are cleaved as a signal peptide. The 109-residue stretch at 30-138 (EIISLDTENI…VKALADYIRQ (109 aa)) folds into the Thioredoxin domain. 2 disulfide bridges follow: cysteine 189–cysteine 241 and cysteine 301–cysteine 318. Residues 236-285 (WIQDKCVPLVREITFENGEELTEEGLPFLILFHMKEDTESLEIFQNEVAR) form an interaction with ITPR1 region. The interval 360–387 (FHHGPDPTDTAPGEEVQDVASSPPESSF) is disordered. Positions 378-387 (VASSPPESSF) are enriched in polar residues. The Prevents secretion from ER motif lies at 403 to 406 (RDEL).

In terms of assembly, forms mixed disulfides with both ERO1A and ERO1B and cargo folding intermediates; the interactions with ERO1A and ERO1B result in their retention in the endoplasmic reticulum. Directly interacts with ITPR1 in a pH-, redox state- and calcium-dependent manner, but not with ITPR2 or ITPR3. The strength of this interaction inversely correlates with calcium concentration.

It localises to the endoplasmic reticulum lumen. Functionally, mediates thiol-dependent retention in the early secretory pathway, forming mixed disulfides with substrate proteins through its conserved CRFS motif. Inhibits the calcium channel activity of ITPR1. May have a role in the control of oxidative protein folding in the endoplasmic reticulum. Required to retain ERO1A and ERO1B in the endoplasmic reticulum. In Bos taurus (Bovine), this protein is Endoplasmic reticulum resident protein 44 (ERP44).